The chain runs to 185 residues: Ribosome-recycling factor (185 aa).

Belongs to the RRF family.

The protein localises to the cytoplasm. Its function is as follows. Responsible for the release of ribosomes from messenger RNA at the termination of protein biosynthesis. May increase the efficiency of translation by recycling ribosomes from one round of translation to another. In Bacillus licheniformis (strain ATCC 14580 / DSM 13 / JCM 2505 / CCUG 7422 / NBRC 12200 / NCIMB 9375 / NCTC 10341 / NRRL NRS-1264 / Gibson 46), this protein is Ribosome-recycling factor.